We begin with the raw amino-acid sequence, 119 residues long: Protein MRP-126 (119 aa).

EF-hand domains follow at residues 23–58 and 59–94; these read DVFH…LKHV and KNQV…VTVA. Residues Thr37, Glu42, Asp72, Asn74, Asp76, Gln78, and Glu83 each contribute to the Ca(2+) site.

It belongs to the S-100 family. As to expression, expressed in v-myb-transformed myelomonocytic cells.

The chain is Protein MRP-126 from Gallus gallus (Chicken).